A 274-amino-acid polypeptide reads, in one-letter code: Sulfur carrier protein FdhD (274 aa).

C121 acts as the Cysteine persulfide intermediate in catalysis. Position 258-263 (258-263 (FSKPGR)) interacts with Mo-bis(molybdopterin guanine dinucleotide).

Belongs to the FdhD family.

The protein resides in the cytoplasm. Required for formate dehydrogenase (FDH) activity. Acts as a sulfur carrier protein that transfers sulfur from IscS to the molybdenum cofactor prior to its insertion into FDH. This is Sulfur carrier protein FdhD from Yersinia pestis bv. Antiqua (strain Antiqua).